The sequence spans 204 residues: Protein GrpE (204 aa).

Basic and acidic residues-rich tracts occupy residues 1-21 and 36-46; these read MEELEKDKIERNEEMSEEVKG and EEKIETEVEQK. Residues 1 to 46 are disordered; the sequence is MEELEKDKIERNEEMSEEVKGEGPPSELEQSEEVVEEKIETEVEQK.

Belongs to the GrpE family. In terms of assembly, homodimer.

The protein localises to the cytoplasm. Participates actively in the response to hyperosmotic and heat shock by preventing the aggregation of stress-denatured proteins, in association with DnaK and GrpE. It is the nucleotide exchange factor for DnaK and may function as a thermosensor. Unfolded proteins bind initially to DnaJ; upon interaction with the DnaJ-bound protein, DnaK hydrolyzes its bound ATP, resulting in the formation of a stable complex. GrpE releases ADP from DnaK; ATP binding to DnaK triggers the release of the substrate protein, thus completing the reaction cycle. Several rounds of ATP-dependent interactions between DnaJ, DnaK and GrpE are required for fully efficient folding. The chain is Protein GrpE from Caldanaerobacter subterraneus subsp. tengcongensis (strain DSM 15242 / JCM 11007 / NBRC 100824 / MB4) (Thermoanaerobacter tengcongensis).